Consider the following 225-residue polypeptide: UPF0758 protein Shewmr4_3597 (225 aa).

The MPN domain maps to valine 102–isoleucine 224. Zn(2+)-binding residues include histidine 173, histidine 175, and aspartate 186. The JAMM motif signature appears at histidine 173–aspartate 186.

The protein belongs to the UPF0758 family.

In Shewanella sp. (strain MR-4), this protein is UPF0758 protein Shewmr4_3597.